Reading from the N-terminus, the 306-residue chain is Leucine-rich repeat-containing protein 59 (306 aa).

M1 carries the N-acetylmethionine modification. T2 is modified (N-acetylthreonine; in Leucine-rich repeat-containing protein 59, N-terminally processed). Residues 2-244 (TKAGSKGGNL…KPPPRKHTRS (243 aa)) are Cytoplasmic-facing. LRR repeat units lie at residues 10-31 (NLRD…NEVP), 40-62 (KATV…CGLT), 63-84 (HLVK…FGRL), 86-107 (NLQH…FAQL), and 109-128 (SLKW…AKVA). A phosphoserine mark is found at S23 and S25. At K73 the chain carries N6-succinyllysine. An N6-acetyllysine modification is found at K135. A coiled-coil region spans residues 152–216 (QADQERERQR…KAAKREQEKK (65 aa)). The span at 175 to 221 (AKQRAKEAQERELRKREKAEEKERRRKEYDALKAAKREQEKKPKKET) shows a compositional bias: basic and acidic residues. Residues 175 to 241 (AKQRAKEAQE…RPRKPPPRKH (67 aa)) are disordered. A compositionally biased stretch (basic residues) spans 229–241 (SSSRPRKPPPRKH). Residues 245–265 (WAVLKLLLLLLLCVAGGLVAC) form a helical membrane-spanning segment. Over 266–306 (RVTELQQQPLCTSVNTIYDNAVRGLRSHDILQWVLQTDSQQ) the chain is Lumenal.

As to quaternary structure, can form homodimers. Interacts with SGO1. Interacts with FGF1.

It localises to the microsome membrane. Its subcellular location is the endoplasmic reticulum membrane. The protein resides in the nucleus envelope. Required for nuclear import of FGF1, but not that of FGF2. Might regulate nuclear import of exogenous FGF1 by facilitating interaction with the nuclear import machinery and by transporting cytosolic FGF1 to, and possibly through, the nuclear pores. The polypeptide is Leucine-rich repeat-containing protein 59 (LRRC59) (Bos taurus (Bovine)).